The primary structure comprises 176 residues: Ribosome maturation factor RimP (176 aa).

A disordered region spans residues Leu143–Ile176.

This sequence belongs to the RimP family.

The protein resides in the cytoplasm. Its function is as follows. Required for maturation of 30S ribosomal subunits. This is Ribosome maturation factor RimP from Chlorobium luteolum (strain DSM 273 / BCRC 81028 / 2530) (Pelodictyon luteolum).